A 315-amino-acid polypeptide reads, in one-letter code: Capsid protein (315 aa).

The disordered stretch occupies residues 1-60 (MPPKPAPGDNEGNASGSTPTPPPPPPARTAEEARLRLAEMEREREQEQLLEEMNSNTPAE). The span at 29 to 47 (TAEEARLRLAEMEREREQE) shows a compositional bias: basic and acidic residues.

Belongs to the potexviruses coat protein family.

It localises to the virion. Required for genome encapsidation. Forms ribonucleoprotein complexes along with TGB1 helicase and viral RNA. The protein is Capsid protein of Chrysanthemum morifolium (Florist's daisy).